Consider the following 250-residue polypeptide: UPF0758 protein RPB_0700 (250 aa).

Residues 1 to 27 (MVDPISNAAPPMPADSSERLDPPGFAE) are disordered. An MPN domain is found at 128-250 (VLSSWSAVID…HASLKGLKLF (123 aa)). Residues H199, H201, and D212 each coordinate Zn(2+). A JAMM motif motif is present at residues 199 to 212 (HNHPSGDPTPSQAD).

It belongs to the UPF0758 family.

The sequence is that of UPF0758 protein RPB_0700 from Rhodopseudomonas palustris (strain HaA2).